Consider the following 113-residue polypeptide: MKAKDKYKGRTKNKVKSVDMMYLALRRRKNEFTQLHNHADSVADPRSCRPGDNAGREAVPGGVFCACIFQGLPCAKGRDWRSNKNAGWGCDDDDHDNWCHYLSCRKNLSAFAT.

This is an uncharacterized protein from Saccharomyces cerevisiae (strain ATCC 204508 / S288c) (Baker's yeast).